The primary structure comprises 542 residues: Chaperonin GroEL (542 aa).

ATP-binding positions include 29–32 (TMGP), lysine 50, 86–90 (DGTTT), glycine 414, 477–479 (NAA), and aspartate 493.

It belongs to the chaperonin (HSP60) family. In terms of assembly, forms a cylinder of 14 subunits composed of two heptameric rings stacked back-to-back. Interacts with the co-chaperonin GroES.

The protein resides in the cytoplasm. The catalysed reaction is ATP + H2O + a folded polypeptide = ADP + phosphate + an unfolded polypeptide.. Functionally, together with its co-chaperonin GroES, plays an essential role in assisting protein folding. The GroEL-GroES system forms a nano-cage that allows encapsulation of the non-native substrate proteins and provides a physical environment optimized to promote and accelerate protein folding. This is Chaperonin GroEL from Sulfurovum sp. (strain NBC37-1).